A 155-amino-acid polypeptide reads, in one-letter code: Ubiquitin-conjugating enzyme E2 14 (155 aa).

The UBC core domain occupies 7–154 (SSSRRLTKEY…ARDYVEQFAK (148 aa)). The Glycyl thioester intermediate role is filled by cysteine 91.

It belongs to the ubiquitin-conjugating enzyme family.

The enzyme catalyses S-ubiquitinyl-[E1 ubiquitin-activating enzyme]-L-cysteine + [E2 ubiquitin-conjugating enzyme]-L-cysteine = [E1 ubiquitin-activating enzyme]-L-cysteine + S-ubiquitinyl-[E2 ubiquitin-conjugating enzyme]-L-cysteine.. The protein operates within protein modification; protein ubiquitination. Functionally, catalyzes the covalent attachment of ubiquitin to other proteins. Mediates the selective degradation of short-lived and abnormal proteins. The polypeptide is Ubiquitin-conjugating enzyme E2 14 (ubc14) (Schizosaccharomyces pombe (strain 972 / ATCC 24843) (Fission yeast)).